Reading from the N-terminus, the 276-residue chain is Short-chain dehydrogenase/reductase ATR10 (276 aa).

Residues I29, S51, D78, and N105 each coordinate NADP(+). S161 functions as the Proton donor in the catalytic mechanism. K185 and T214 together coordinate NADP(+). Catalysis depends on K185, which acts as the Lowers pKa of active site Tyr.

It belongs to the short-chain dehydrogenases/reductases (SDR) family.

Its pathway is mycotoxin biosynthesis. Short-chain dehydrogenase/reductase; part of the core atranone cluster (CAC) which products are predicted to catalyze most or all steps of mycotoxin atranone synthesis, starting from geranylgeranyl pyrophosphate (GGPP). The initial cyclization of GGPP to dolabellane is probably performed by the terpene cyclase ATR13. The Baeyer-Villiger oxidation near the end of the atranone synthesis, which converts atranones D and E to atranones F and G is predicted to be catalyzed by the monooxygenase ATR8. Of the CAC's other predicted gene products, the reducing PKS ATR6 might synthesize a polyketide chain. This polyketide is probably transferred onto the atranone backbone by the polyketide transferase ATR5. Other predicted CAC products include 4 oxygenases (ATR2, ATR3, ATR4, and ATR14), 3 short-chain reductases (ATR7, ATR9, and ATR10), and a methyltransferase (ATR12). These may all be involved in the various steps of atranone biosynthesis, although their specific roles must await experimental determination. In Stachybotrys chlorohalonatus (strain IBT 40285), this protein is Short-chain dehydrogenase/reductase ATR10.